Consider the following 957-residue polypeptide: Glycine dehydrogenase (decarboxylating) (957 aa).

Lys708 bears the N6-(pyridoxal phosphate)lysine mark.

Belongs to the GcvP family. The glycine cleavage system is composed of four proteins: P, T, L and H. The cofactor is pyridoxal 5'-phosphate.

The catalysed reaction is N(6)-[(R)-lipoyl]-L-lysyl-[glycine-cleavage complex H protein] + glycine + H(+) = N(6)-[(R)-S(8)-aminomethyldihydrolipoyl]-L-lysyl-[glycine-cleavage complex H protein] + CO2. The glycine cleavage system catalyzes the degradation of glycine. The P protein binds the alpha-amino group of glycine through its pyridoxal phosphate cofactor; CO(2) is released and the remaining methylamine moiety is then transferred to the lipoamide cofactor of the H protein. This is Glycine dehydrogenase (decarboxylating) from Escherichia coli O7:K1 (strain IAI39 / ExPEC).